Here is a 391-residue protein sequence, read N- to C-terminus: Mannonate dehydratase (391 aa).

The interval glutamate 334–leucine 359 is disordered.

The protein belongs to the mannonate dehydratase family. It depends on Fe(2+) as a cofactor. Requires Mn(2+) as cofactor.

It catalyses the reaction D-mannonate = 2-dehydro-3-deoxy-D-gluconate + H2O. The protein operates within carbohydrate metabolism; pentose and glucuronate interconversion. Its function is as follows. Catalyzes the dehydration of D-mannonate. This Chromohalobacter salexigens (strain ATCC BAA-138 / DSM 3043 / CIP 106854 / NCIMB 13768 / 1H11) protein is Mannonate dehydratase.